The chain runs to 461 residues: Bifunctional protein GlmU (461 aa).

The tract at residues 1–232 is pyrophosphorylase; it reads MNLQIIILAA…SFEVQGINNR (232 aa). UDP-N-acetyl-alpha-D-glucosamine is bound by residues 8 to 11, K22, Q73, and 78 to 79; these read LAAG and GT. D102 is a binding site for Mg(2+). UDP-N-acetyl-alpha-D-glucosamine is bound by residues G142, E157, and N230. N230 serves as a coordination point for Mg(2+). A linker region spans residues 233 to 253; it reads QQLQQLERTWQQRAANQLMEK. Positions 254 to 461 are N-acetyltransferase; sequence GATLADANRF…WKRPVKRERD (208 aa). Positions 336 and 354 each coordinate UDP-N-acetyl-alpha-D-glucosamine. H366 (proton acceptor) is an active-site residue. UDP-N-acetyl-alpha-D-glucosamine is bound by residues Y369 and N380. Acetyl-CoA is bound by residues A383, 389-390, S408, and A426; that span reads NY.

This sequence in the N-terminal section; belongs to the N-acetylglucosamine-1-phosphate uridyltransferase family. In the C-terminal section; belongs to the transferase hexapeptide repeat family. As to quaternary structure, homotrimer. The cofactor is Mg(2+).

It localises to the cytoplasm. The enzyme catalyses alpha-D-glucosamine 1-phosphate + acetyl-CoA = N-acetyl-alpha-D-glucosamine 1-phosphate + CoA + H(+). It carries out the reaction N-acetyl-alpha-D-glucosamine 1-phosphate + UTP + H(+) = UDP-N-acetyl-alpha-D-glucosamine + diphosphate. Its pathway is nucleotide-sugar biosynthesis; UDP-N-acetyl-alpha-D-glucosamine biosynthesis; N-acetyl-alpha-D-glucosamine 1-phosphate from alpha-D-glucosamine 6-phosphate (route II): step 2/2. It participates in nucleotide-sugar biosynthesis; UDP-N-acetyl-alpha-D-glucosamine biosynthesis; UDP-N-acetyl-alpha-D-glucosamine from N-acetyl-alpha-D-glucosamine 1-phosphate: step 1/1. It functions in the pathway bacterial outer membrane biogenesis; LPS lipid A biosynthesis. Its function is as follows. Catalyzes the last two sequential reactions in the de novo biosynthetic pathway for UDP-N-acetylglucosamine (UDP-GlcNAc). The C-terminal domain catalyzes the transfer of acetyl group from acetyl coenzyme A to glucosamine-1-phosphate (GlcN-1-P) to produce N-acetylglucosamine-1-phosphate (GlcNAc-1-P), which is converted into UDP-GlcNAc by the transfer of uridine 5-monophosphate (from uridine 5-triphosphate), a reaction catalyzed by the N-terminal domain. In Legionella pneumophila (strain Paris), this protein is Bifunctional protein GlmU.